A 154-amino-acid chain; its full sequence is MIHFILLFSRQGKLRLQKWYITLPDKERKKITREIVQIILSRGHRTSSFVDWKELKLVYKRYASLYFCCAIENQDNELLTLEIVHRYVELLDKYFGNVCELDIIFNFEKAYFILDEFIIGGEIQETSKKIAVKAIEDSDMLQEVSTVSQTMGER.

The protein belongs to the adaptor complexes small subunit family. Adaptor protein complex 1 (AP-1) is a heterotetramer composed of two large adaptins (gamma-type subunit AP1G1 and beta-type subunit AP1B1), a medium adaptin (mu-type subunit AP1M1 or AP1M2) and a small adaptin (sigma-type subunit AP1S1 or AP1S2 or AP1S3). As to expression, widely expressed.

Its subcellular location is the golgi apparatus. It is found in the cytoplasmic vesicle membrane. It localises to the membrane. The protein localises to the clathrin-coated pit. Functionally, subunit of clathrin-associated adaptor protein complex 1 that plays a role in protein sorting in the late-Golgi/trans-Golgi network (TGN) and/or endosomes. The AP complexes mediate both the recruitment of clathrin to membranes and the recognition of sorting signals within the cytosolic tails of transmembrane cargo molecules. Involved in TLR3 trafficking. The protein is AP-1 complex subunit sigma-3 (AP1S3) of Homo sapiens (Human).